The following is an 85-amino-acid chain: Phosphocarrier protein HPr (85 aa).

Residues 1–85 enclose the HPr domain; it reads MYEKQVEITA…HLVALMDQLH (85 aa). The active-site Pros-phosphohistidine intermediate is the H15.

This sequence belongs to the HPr family.

Its subcellular location is the cytoplasm. General (non sugar-specific) component of the phosphoenolpyruvate-dependent sugar phosphotransferase system (sugar PTS). This major carbohydrate active-transport system catalyzes the phosphorylation of incoming sugar substrates concomitantly with their translocation across the cell membrane. The phosphoryl group from phosphoenolpyruvate (PEP) is transferred to the phosphoryl carrier protein HPr by enzyme I. Phospho-HPr then transfers it to the PTS EIIA domain. The sequence is that of Phosphocarrier protein HPr (ptsH) from Vibrio cholerae serotype O1 (strain ATCC 39315 / El Tor Inaba N16961).